A 371-amino-acid chain; its full sequence is NDMA-dependent alcohol dehydrogenase (371 aa).

Positions 40, 61, 91, 94, 97, 105, and 167 each coordinate Zn(2+).

It belongs to the zinc-containing alcohol dehydrogenase family. Homotrimer. NADH serves as cofactor.

It catalyses the reaction N,N-dimethyl-4-nitrosoaniline + a primary alcohol = 4-(hydroxylamino)-N,N-dimethylaniline + an aldehyde. The catalysed reaction is ethanol + A = acetaldehyde + AH2. With respect to regulation, inhibited by trans-4-(N,N-dimethylamino)-cinnamaldehyde through direct binding to the catalytic zinc ion in a substrate-like geometry. Isobutyramide acts as a competitive inhibitor with respect to the electron acceptor NDMA. Acetaldehyde, AMP, ADP, ATP, as well as CuSO(4), FeSO(4), HgCl(2), NiCl(2), ZnSO(4), KCN, and NaN(3) are additional inhibitors of the catalytic activity. Catalytically different from common alcohol dehydrogenases. Effective in oxidizing ethanol, other primary alcohols and benzylalcohol only in the presence of p-nitroso-N,N-dimethylaniline (NDMA) as an electron acceptor. NADH acts as a cofactor here instead as a coenzyme. The polypeptide is NDMA-dependent alcohol dehydrogenase (Amycolatopsis methanolica).